Reading from the N-terminus, the 107-residue chain is Cytochrome c2 (107 aa).

Residue glutamine 1 is modified to Pyrrolidone carboxylic acid. Heme c-binding residues include cysteine 13, cysteine 16, histidine 17, and methionine 79.

Belongs to the cytochrome c family. Post-translationally, binds 1 heme c group covalently per subunit.

The protein resides in the periplasm. Its function is as follows. Cytochrome c2 is found mainly in purple, non-sulfur, photosynthetic bacteria where it functions as the electron donor to the oxidized bacteriochlorophyll in the photophosphorylation pathway. However, it may also have a role in the respiratory chain and is found in some non-photosynthetic bacteria. The protein is Cytochrome c2 of Rhodoplanes tepidamans (Rhodoplanes cryptolactis).